Reading from the N-terminus, the 437-residue chain is Serine hydroxymethyltransferase (437 aa).

Residues L130 and 134-136 contribute to the (6S)-5,6,7,8-tetrahydrofolate site; that span reads GHL. At K239 the chain carries N6-(pyridoxal phosphate)lysine.

The protein belongs to the SHMT family. In terms of assembly, homodimer. Pyridoxal 5'-phosphate serves as cofactor.

The protein resides in the cytoplasm. The catalysed reaction is (6R)-5,10-methylene-5,6,7,8-tetrahydrofolate + glycine + H2O = (6S)-5,6,7,8-tetrahydrofolate + L-serine. It functions in the pathway one-carbon metabolism; tetrahydrofolate interconversion. Its pathway is amino-acid biosynthesis; glycine biosynthesis; glycine from L-serine: step 1/1. Catalyzes the reversible interconversion of serine and glycine with tetrahydrofolate (THF) serving as the one-carbon carrier. This reaction serves as the major source of one-carbon groups required for the biosynthesis of purines, thymidylate, methionine, and other important biomolecules. Also exhibits THF-independent aldolase activity toward beta-hydroxyamino acids, producing glycine and aldehydes, via a retro-aldol mechanism. The chain is Serine hydroxymethyltransferase from Bartonella quintana (strain Toulouse) (Rochalimaea quintana).